The chain runs to 163 residues: Transcriptional repressor NrdR (163 aa).

A zinc finger spans residues C3–C34. The 91-residue stretch at L49–E139 folds into the ATP-cone domain.

Belongs to the NrdR family. Zn(2+) is required as a cofactor.

Its function is as follows. Negatively regulates transcription of bacterial ribonucleotide reductase nrd genes and operons by binding to NrdR-boxes. The chain is Transcriptional repressor NrdR from Streptococcus mutans serotype c (strain ATCC 700610 / UA159).